Reading from the N-terminus, the 141-residue chain is Putative pre-16S rRNA nuclease (141 aa).

Belongs to the YqgF nuclease family.

The protein resides in the cytoplasm. Its function is as follows. Could be a nuclease involved in processing of the 5'-end of pre-16S rRNA. The chain is Putative pre-16S rRNA nuclease from Shewanella denitrificans (strain OS217 / ATCC BAA-1090 / DSM 15013).